The following is a 304-amino-acid chain: Putative S-adenosyl-L-methionine-dependent methyltransferase MAP_4189c (304 aa).

Residues aspartate 130 and 159-160 (DL) each bind S-adenosyl-L-methionine.

The protein belongs to the UPF0677 family.

In terms of biological role, exhibits S-adenosyl-L-methionine-dependent methyltransferase activity. The polypeptide is Putative S-adenosyl-L-methionine-dependent methyltransferase MAP_4189c (Mycolicibacterium paratuberculosis (strain ATCC BAA-968 / K-10) (Mycobacterium paratuberculosis)).